The following is a 463-amino-acid chain: Serine carboxypeptidase-like 32 (463 aa).

Residues 1–22 (MMNISNVSIALYLCTLFAFVSS) form the signal peptide. Cystine bridges form between Cys-86–Cys-345, Cys-249–Cys-262, and Cys-286–Cys-313. N-linked (GlcNAc...) asparagine glycosylation occurs at Asn-137. Residue Ser-179 is part of the active site. Residues Asn-201 and Asn-250 are each glycosylated (N-linked (GlcNAc...) asparagine). Residues Asn-341 and Asn-354 are each glycosylated (N-linked (GlcNAc...) asparagine). Residues Asp-384 and His-436 contribute to the active site.

Belongs to the peptidase S10 family. Expressed in flowers.

The protein resides in the secreted. In terms of biological role, probable carboxypeptidase. This Arabidopsis thaliana (Mouse-ear cress) protein is Serine carboxypeptidase-like 32 (SCPL32).